Reading from the N-terminus, the 1770-residue chain is Transposon Ty2-DR2 Gag-Pol polyprotein (1770 aa).

Polar residues-rich tracts occupy residues 1–39 (MESQ…SASN) and 49–60 (KVNSQEETTPGT). 2 disordered regions span residues 1–89 (MESQ…QQHG) and 360–449 (HSEY…SNDE). Residues 295–397 (ENNINVSDRL…SSKPRAAKAH (103 aa)) form an RNA-binding region. The span at 369–381 (TSPNTTNTKVTTR) shows a compositional bias: low complexity. 2 stretches are compositionally biased toward polar residues: residues 399 to 408 (IATSSKFSRV) and 415 to 435 (ESTV…GQQQ). The For protease activity; shared with dimeric partner role is filled by aspartate 457. Residues 579 to 636 (NVNKSKSVNKYPYPLIHRMLGHANFRSIQKSLKKNAVTYLKESDIEWSNASTYQCPDC) are integrase-type zinc finger-like. Residues 656-831 (ESYEPFQYLH…AGLDITTILP (176 aa)) form the Integrase catalytic domain. Residues aspartate 667 and aspartate 732 each contribute to the Mg(2+) site. Disordered regions lie at residues 1005 to 1038 (GGTI…MIDL), 1059 to 1135 (TEEP…KSSK), and 1171 to 1222 (SRQT…LEPP). Polar residues-rich tracts occupy residues 1009 to 1024 (ESDT…FTAR) and 1065 to 1082 (QRNS…STPS). The Bipartite nuclear localization signal motif lies at 1193-1227 (KKRSLEDNETEIEVSRDTWNNKNMRSLEPPRSKKR). The Reverse transcriptase Ty1/copia-type domain maps to 1353 to 1491 (NDYYITQLDI…DILGLEIKYQ (139 aa)). Residues aspartate 1361, aspartate 1442, aspartate 1443, aspartate 1625, glutamate 1667, and aspartate 1700 each coordinate Mg(2+). Positions 1625–1767 (DASYGNQPYY…IKTFKLLTNK (143 aa)) constitute an RNase H Ty1/copia-type domain.

The capsid protein forms a homotrimer, from which the VLPs are assembled. The protease is a homodimer, whose active site consists of two apposed aspartic acid residues. In terms of processing, initially, virus-like particles (VLPs) are composed of the structural unprocessed proteins Gag and Gag-Pol, and also contain the host initiator methionine tRNA (tRNA(i)-Met) which serves as a primer for minus-strand DNA synthesis, and a dimer of genomic Ty RNA. Processing of the polyproteins occurs within the particle and proceeds by an ordered pathway, called maturation. First, the protease (PR) is released by autocatalytic cleavage of the Gag-Pol polyprotein, and this cleavage is a prerequisite for subsequent processing at the remaining sites to release the mature structural and catalytic proteins. Maturation takes place prior to the RT reaction and is required to produce transposition-competent VLPs.

The protein localises to the cytoplasm. It is found in the nucleus. The enzyme catalyses DNA(n) + a 2'-deoxyribonucleoside 5'-triphosphate = DNA(n+1) + diphosphate. It carries out the reaction Endonucleolytic cleavage to 5'-phosphomonoester.. Capsid protein (CA) is the structural component of the virus-like particle (VLP), forming the shell that encapsulates the retrotransposons dimeric RNA genome. The particles are assembled from trimer-clustered units and there are holes in the capsid shells that allow for the diffusion of macromolecules. CA also has nucleocapsid-like chaperone activity, promoting primer tRNA(i)-Met annealing to the multipartite primer-binding site (PBS), dimerization of Ty2 RNA and initiation of reverse transcription. In terms of biological role, the aspartyl protease (PR) mediates the proteolytic cleavages of the Gag and Gag-Pol polyproteins after assembly of the VLP. Its function is as follows. Reverse transcriptase/ribonuclease H (RT) is a multifunctional enzyme that catalyzes the conversion of the retro-elements RNA genome into dsDNA within the VLP. The enzyme displays a DNA polymerase activity that can copy either DNA or RNA templates, and a ribonuclease H (RNase H) activity that cleaves the RNA strand of RNA-DNA heteroduplexes during plus-strand synthesis and hydrolyzes RNA primers. The conversion leads to a linear dsDNA copy of the retrotransposon that includes long terminal repeats (LTRs) at both ends. Functionally, integrase (IN) targets the VLP to the nucleus, where a subparticle preintegration complex (PIC) containing at least integrase and the newly synthesized dsDNA copy of the retrotransposon must transit the nuclear membrane. Once in the nucleus, integrase performs the integration of the dsDNA into the host genome. In Saccharomyces cerevisiae (strain ATCC 204508 / S288c) (Baker's yeast), this protein is Transposon Ty2-DR2 Gag-Pol polyprotein (TY2B-DR2).